The primary structure comprises 98 residues: Cystatin-B (98 aa).

Met-1 bears the N-acetylmethionine mark. Residues 46–50 (QVVAG) carry the Secondary area of contact motif.

It belongs to the cystatin family. Able to form dimers stabilized by noncovalent forces.

Its subcellular location is the cytoplasm. It localises to the nucleus. Its function is as follows. This is an intracellular thiol proteinase inhibitor. Tightly binding reversible inhibitor of cathepsins L, H and B. This Macaca fuscata fuscata (Japanese macaque) protein is Cystatin-B (CSTB).